Consider the following 156-residue polypeptide: Ribosomal RNA large subunit methyltransferase H (156 aa).

S-adenosyl-L-methionine is bound by residues L73, G104, and 123–128 (IGPLTL).

Belongs to the RNA methyltransferase RlmH family. As to quaternary structure, homodimer.

The protein localises to the cytoplasm. The enzyme catalyses pseudouridine(1915) in 23S rRNA + S-adenosyl-L-methionine = N(3)-methylpseudouridine(1915) in 23S rRNA + S-adenosyl-L-homocysteine + H(+). Its function is as follows. Specifically methylates the pseudouridine at position 1915 (m3Psi1915) in 23S rRNA. The polypeptide is Ribosomal RNA large subunit methyltransferase H (Xanthomonas campestris pv. campestris (strain 8004)).